The primary structure comprises 84 residues: Cryptic plasmid protein A (84 aa).

The sequence is that of Cryptic plasmid protein A (cppA) from Neisseria gonorrhoeae.